The sequence spans 335 residues: MAVPAVSPQPILAPLTPAAIFLVATIGADGEATVHDALSKISGLVRAIGFRDPTKHLSVVVSIGSDAWDRLFAGPRPTELHPFVELTGPRHTAPATPGDLLFHIRAETMDVCFELAGRILKSMGDAVTVVDEVHGFRFFDNRDLLGFVDGTENPSGPIAIKATTIGDEDRNFAGSCYVHVQKYVHDMASWESLSVTEQERVIGRTKLDDIELDDNAKPANSHVALNVITDDDGTERKIVRHNMPFGEVGKGEYGTYFIGYSRTPTVTEQMLRNMFLGDPAGNTDRVLDFSTAVTGGLFFSPTIDFLDHPPPLPQAATPTLAAGSLSIGSLKGSPR.

Aspartate 149 acts as the Proton acceptor in catalysis. A heme-binding site is contributed by histidine 222. The interval 312 to 335 is targeting peptide; it reads LPQAATPTLAAGSLSIGSLKGSPR.

Belongs to the DyP-type peroxidase family. In terms of assembly, homotetramer, presumably also in the encapsulin nanocompartment. It depends on heme b as a cofactor.

It is found in the encapsulin nanocompartment. It carries out the reaction 2 a phenolic donor + H2O2 = 2 a phenolic radical donor + 2 H2O. In terms of biological role, cargo of a type 1 encapsulin nanocompartment in situ; this cargo protects against oxidative stress at low pH. When expressed in the cytoplasm (absence of the encapsulin shell gene) it is almost as protective as the intact nanocompartment; its encapsulation has a modest yet significant effect on protection against oxidative stress at low pH. A heme-dependent peroxidase, it probably does not have deferrochelatase activity. Converts guaiacol and H2O2 to tetraguaiacol, also acts on 2,2'-azino-bis(3-ethylbenzothiazoline-6-sulfonic acid) (ABTS). Retains peroxidase activity when encapsulated but has a reduced set of substrates; acts on ABTS but not guaiacol. This is Dye-decolorizing peroxidase from Mycobacterium tuberculosis (strain ATCC 25618 / H37Rv).